The following is a 146-amino-acid chain: Large ribosomal subunit protein uL11 (146 aa).

This sequence belongs to the universal ribosomal protein uL11 family. As to quaternary structure, part of the ribosomal stalk of the 50S ribosomal subunit. Interacts with L10 and the large rRNA to form the base of the stalk. L10 forms an elongated spine to which L12 dimers bind in a sequential fashion forming a multimeric L10(L12)X complex. One or more lysine residues are methylated.

Forms part of the ribosomal stalk which helps the ribosome interact with GTP-bound translation factors. In Buchnera aphidicola subsp. Baizongia pistaciae (strain Bp), this protein is Large ribosomal subunit protein uL11.